A 152-amino-acid polypeptide reads, in one-letter code: UPF0735 ACT domain-containing protein SAS1579 (152 aa).

Residues 75–150 enclose the ACT domain; it reads TLILYVTDIV…YVSKVELISM (76 aa).

It belongs to the UPF0735 family.

The sequence is that of UPF0735 ACT domain-containing protein SAS1579 from Staphylococcus aureus (strain MSSA476).